We begin with the raw amino-acid sequence, 607 residues long: Guanine nucleotide-binding protein-like 1 (607 aa).

A compositionally biased stretch (basic residues) spans 1–14 (MPRKKPFSVKQKKK). Positions 1–81 (MPRKKPFSVK…GPRGYDPNRY (81 aa)) are disordered. A compositionally biased stretch (basic and acidic residues) spans 15–26 (QLQDKRERKRGL). Phosphoserine is present on residues serine 32, serine 33, and serine 34. Phosphothreonine occurs at positions 48 and 50. Serine 51 and serine 68 each carry phosphoserine. One can recognise a CP-type G domain in the interval 178-418 (WRQLWRVLEM…LCDCPGLIFP (241 aa)). 225–228 (NKVD) contacts GTP. The residue at position 324 (serine 324) is a Phosphoserine. Residues 367 to 374 (GFPNVGKS) and 411 to 415 (DCPGL) each bind GTP. The tract at residues 547-607 (GPAGDEEEEE…PYALLGEDEC (61 aa)) is disordered. Residues 550-584 (GDEEEEEEEELSSSCEEEGEEDRDADEEGEGDEDT) are compositionally biased toward acidic residues. A phosphoserine mark is found at serine 561, serine 562, and serine 563.

Belongs to the TRAFAC class YlqF/YawG GTPase family.

In terms of biological role, possible regulatory or functional link with the histocompatibility cluster. The sequence is that of Guanine nucleotide-binding protein-like 1 (GNL1) from Macaca fascicularis (Crab-eating macaque).